The primary structure comprises 238 residues: Aspirochlorine biosynthesis protein N (238 aa).

The protein belongs to the asaB hydroxylase/desaturase family.

It functions in the pathway mycotoxin biosynthesis. Its function is as follows. Part of the gene cluster that mediates the biosynthesis of aspirochlorine (or antibiotic A30641), an unusual halogenated spiro compound with distinctive antifungal properties due to selective inhibition of protein biosynthesis, and which is also active against bacteria, viruses, and murine tumor cells. The non-ribosomal peptide synthetase (NRPS) aclP is responsible the formation of the diketopiperazine (DKP) core from the condensation of 2 phenylalanine residues. One Phe residue is tailored into chlorotyrosine by hydroxylation and chlorination, whereas the second Phe undergoes an unprecedented C-C bond cleavage to be converted into glycine. After formation of the DKP, sulfur is incorporated into the DKP by conjugation with glutathione by aclG, followed by its stepwise degradation to the thiol by aclI, aclJ and aclK, and the dithiol oxidation by aclT. In addition, oxygenases (aclB, aclC, aclL and aclO) and O-methyltransferases (aclM and aclU) act as tailoring enzymes to produce the intermediate dechloroaspirochlorine. Ultimately, chlorination of dechloroaspirochlorine by the halogenase aclH is the last step in the aspirochlorine pathway. The sequence is that of Aspirochlorine biosynthesis protein N from Aspergillus oryzae (strain ATCC 42149 / RIB 40) (Yellow koji mold).